Reading from the N-terminus, the 164-residue chain is R-phycoerythrin alpha chain (164 aa).

Positions 47, 81, 82, 84, 88, 137, 139, and 142 each coordinate (2R,3E)-phycoerythrobilin.

It belongs to the phycobiliprotein family. In terms of assembly, heterododecamer of 6 alpha and 6 beta chains. The basic functional unit of phycobiliproteins is a ring-shaped hexamer formed from two back-to-back trimers contacting via the alpha chain subunits. The trimers are composed of alpha/beta subunit heterodimers arranged around a three-fold axis of symmetry. The phycoerythrins also contain a gamma subunit which is located in the center of the hexamer. In terms of processing, contains two covalently linked phycoerythrobilin chromophores.

It is found in the plastid. The protein resides in the chloroplast thylakoid membrane. Its function is as follows. Light-harvesting photosynthetic tetrapyrrole chromophore-protein from the phycobiliprotein complex. The polypeptide is R-phycoerythrin alpha chain (cpeA) (Griffithsia monilis (Red alga)).